The chain runs to 353 residues: Guanidino acid hydrolase, mitochondrial (353 aa).

Residues 1–33 (MLQLLKSSWVRSAGSGVVTWRASAGLFCPGTRQ) constitute a mitochondrion transit peptide. The segment at 29-52 (PGTRQASDTSDTLHHPSPSSESQV) is disordered. Mn(2+) is bound by residues His-163 and His-188. The residue at position 194 (Lys-194) is an N6-acetyllysine. Lys-218 carries the N6-acetyllysine; alternate modification. Lys-218 carries the N6-succinyllysine; alternate modification. Position 279 (Asp-279) interacts with Mn(2+).

It belongs to the arginase family. Agmatinase subfamily. Requires Mn(2+) as cofactor.

It localises to the mitochondrion. The catalysed reaction is 3-guanidinopropanoate + H2O = urea + beta-alanine. It catalyses the reaction 4-guanidinobutanoate + H2O = urea + 4-aminobutanoate. The enzyme catalyses taurocyamine + H2O = urea + taurine. It carries out the reaction L-arginine + H2O = urea + L-ornithine. It participates in nitrogen metabolism; urea cycle; L-ornithine and urea from L-arginine: step 1/1. In terms of biological role, hydrolyzes linear guanidino acids to form urea and the corresponding amines. Displays specificity for substrates having a negatively charged head group and short chains including taurocyamine, guanidino propanoic and butanoic acids. May protect cells by detoxifying potentially harmful amounts of guanidino acids. Metabolizes L-arginine with low efficiency. In Rattus norvegicus (Rat), this protein is Guanidino acid hydrolase, mitochondrial (Agmat).